Consider the following 434-residue polypeptide: Alpha-enolase (434 aa).

Serine 2 bears the N-acetylserine mark. At lysine 5 the chain carries N6-acetyllysine. Serine 40 lines the Mg(2+) pocket. Position 44 is a phosphotyrosine (tyrosine 44). Lysine 60 carries the N6-acetyllysine; alternate modification. At lysine 60 the chain carries N6-succinyllysine; alternate. Lysine 64 and lysine 71 each carry N6-acetyllysine. Lysine 89 bears the N6-acetyllysine; alternate mark. N6-succinyllysine; alternate is present on lysine 89. An N6-acetyllysine modification is found at lysine 126. 2 residues coordinate substrate: histidine 158 and glutamate 167. N6-acetyllysine is present on residues lysine 193 and lysine 199. Residue lysine 202 is modified to N6-acetyllysine; alternate. Lysine 202 is covalently cross-linked (Glycyl lysine isopeptide (Lys-Gly) (interchain with G-Cter in SUMO2); alternate). Glutamate 210 acts as the Proton donor in catalysis. An N6-acetyllysine; alternate mark is found at lysine 228 and lysine 233. At lysine 228 the chain carries N6-succinyllysine; alternate. At lysine 228 the chain carries N6-(2-hydroxyisobutyryl)lysine; alternate. The residue at position 233 (lysine 233) is an N6-malonyllysine; alternate. Residue aspartate 245 coordinates Mg(2+). At lysine 256 the chain carries N6-acetyllysine. Serine 263 bears the Phosphoserine mark. Residue lysine 281 is modified to N6-acetyllysine; alternate. At lysine 281 the chain carries N6-(2-hydroxyisobutyryl)lysine; alternate. Position 285 is an N6-acetyllysine (lysine 285). Phosphotyrosine is present on tyrosine 287. Serine 291 is subject to Phosphoserine. Positions 293 and 318 each coordinate Mg(2+). Substrate is bound by residues glutamate 293 and aspartate 318. N6-acetyllysine occurs at positions 335 and 343. The Proton acceptor role is filled by lysine 343. Substrate contacts are provided by residues 370-373 (SHRS) and lysine 394. Residues 405–434 (AKYNQILRIEEELGSKAKFAGRSFRNPLAK) are required for interaction with PLG. Lysine 406 bears the N6-acetyllysine mark. Position 420 is an N6-acetyllysine; alternate (lysine 420). Lysine 420 carries the N6-succinyllysine; alternate modification. Lysine 420 is modified (N6-malonyllysine; alternate).

This sequence belongs to the enolase family. As to quaternary structure, mammalian enolase is composed of 3 isozyme subunits, alpha, beta and gamma, which can form homodimers or heterodimers which are cell-type and development-specific. ENO1 interacts with PLG in the neuronal plasma membrane and promotes its activation. The C-terminal lysine is required for this binding. Interacts with ENO4 and PGAM2. Interacts with CMTM6. Requires Mg(2+) as cofactor. In terms of processing, ISGylated. Lysine 2-hydroxyisobutyrylation (Khib) by p300/EP300 activates the phosphopyruvate hydratase activity. As to expression, expressed in flagella of epididymal sperm. The alpha/alpha homodimer is expressed in embryo and in most adult tissues. The alpha/beta heterodimer and the beta/beta homodimer are found in striated muscle, and the alpha/gamma heterodimer and the gamma/gamma homodimer in neurons.

It localises to the cytoplasm. The protein localises to the cell membrane. It carries out the reaction (2R)-2-phosphoglycerate = phosphoenolpyruvate + H2O. The protein operates within carbohydrate degradation; glycolysis; pyruvate from D-glyceraldehyde 3-phosphate: step 4/5. Its function is as follows. Glycolytic enzyme that catalyzes the conversion of 2-phosphoglycerate to phosphoenolpyruvate. In addition to glycolysis, involved in various processes such as growth control, hypoxia tolerance and allergic responses. May also function in the intravascular and pericellular fibrinolytic system due to its ability to serve as a receptor and activator of plasminogen on the cell surface of several cell-types such as leukocytes and neurons. Stimulates immunoglobulin production. In Rattus norvegicus (Rat), this protein is Alpha-enolase (Eno1).